The chain runs to 125 residues: Fluoride-specific ion channel FluC (125 aa).

Transmembrane regions (helical) follow at residues 5–25 (IFLVGIGGGIGSVLRFVVSLL), 33–53 (IFPLTTFVVNLLGCFFVGILV), 66–86 (VKIFFITGFCGGFTTFSSFSL), and 100–120 (LVLYILINIIAGCAAVLLGYI). Residues Gly76 and Thr79 each contribute to the Na(+) site.

This sequence belongs to the fluoride channel Fluc/FEX (TC 1.A.43) family.

Its subcellular location is the cell inner membrane. It catalyses the reaction fluoride(in) = fluoride(out). Na(+) is not transported, but it plays an essential structural role and its presence is essential for fluoride channel function. Functionally, fluoride-specific ion channel. Important for reducing fluoride concentration in the cell, thus reducing its toxicity. The polypeptide is Fluoride-specific ion channel FluC (Azobacteroides pseudotrichonymphae genomovar. CFP2).